The chain runs to 460 residues: Argininosuccinate lyase (460 aa).

Belongs to the lyase 1 family. Argininosuccinate lyase subfamily.

The protein localises to the cytoplasm. It catalyses the reaction 2-(N(omega)-L-arginino)succinate = fumarate + L-arginine. The protein operates within amino-acid biosynthesis; L-arginine biosynthesis; L-arginine from L-ornithine and carbamoyl phosphate: step 3/3. This is Argininosuccinate lyase from Streptococcus uberis (strain ATCC BAA-854 / 0140J).